Reading from the N-terminus, the 43-residue chain is Protein PsbN (43 aa).

The chain crosses the membrane as a helical span at residues 7-27 (FVVGILVALVLITAFAVYTAF).

It belongs to the PsbN family.

It is found in the cell inner membrane. May play a role in photosystem I and II biogenesis. This Gloeobacter violaceus (strain ATCC 29082 / PCC 7421) protein is Protein PsbN.